Here is a 322-residue protein sequence, read N- to C-terminus: Cytochrome f (322 aa).

The first 35 residues, 1–35 (MQNRNIFSWVKEQTTRSISVSIMILIYVITWTSIS), serve as a signal peptide directing secretion. Heme-binding residues include Tyr-38, Cys-58, Cys-61, and His-62. Residues 288-308 (VQGLFFFFASVILAQIFLVLK) form a helical membrane-spanning segment.

This sequence belongs to the cytochrome f family. The 4 large subunits of the cytochrome b6-f complex are cytochrome b6, subunit IV (17 kDa polypeptide, petD), cytochrome f and the Rieske protein, while the 4 small subunits are PetG, PetL, PetM and PetN. The complex functions as a dimer. The cofactor is heme.

The protein localises to the plastid. It localises to the chloroplast thylakoid membrane. Functionally, component of the cytochrome b6-f complex, which mediates electron transfer between photosystem II (PSII) and photosystem I (PSI), cyclic electron flow around PSI, and state transitions. The sequence is that of Cytochrome f from Nandina domestica (Heavenly bamboo).